A 307-amino-acid chain; its full sequence is Ribulose bisphosphate carboxylase/oxygenase activase, chloroplastic (307 aa).

The N-terminal 46 residues, 1–46 (MSIPDDKEAGTIDEFLQKEGVLDILQKLDHDLVGLKPVKDRVREIA), are a transit peptide targeting the chloroplast. 73 to 80 (GSPGTGKT) is a binding site for ATP.

Belongs to the CbxX/CfxQ family. In terms of assembly, forms homooligomers. Forms heterohexameric rings with the plastid-encoded Rca subunit consisting of 3 of each nuclear- and plastidial-encoded subunits that alternate in the ring.

It is found in the plastid. The protein resides in the chloroplast. In terms of biological role, required for the expression of ribulose 1,5-bisphosphate carboxylase/oxygenase (RuBisCo). ATPase involved in the activation of red-type RuBisCo, which tends to form inactive complexes with its substrate ribulose 1,5-bisphosphate (RuBP). Catalyzes the release of RuBP from inhibited RuBisCo in an ATP-dependent manner. Activation of RuBisCO involves the ATP-dependent carboxylation of the epsilon-amino group of lysine leading to a carbamate structure. The nuclear-encoded subunit plays a more critical role in activase function than the plastidial-encoded subunit. The polypeptide is Ribulose bisphosphate carboxylase/oxygenase activase, chloroplastic (Cyanidioschyzon merolae (strain NIES-3377 / 10D) (Unicellular red alga)).